We begin with the raw amino-acid sequence, 1046 residues long: Inner tegument protein (1046 aa).

The tract at residues 543–1046 is interaction with large tegument protein; that stretch reads WGIVPPDESN…TGRRANGDNA (504 aa).

Belongs to the herpesviridae inner tegument protein family. As to quaternary structure, interacts (via C-terminus) with the large tegument protein/LTP (via N-terminus).

It is found in the virion tegument. The protein localises to the host cytoplasm. Its subcellular location is the host nucleus. It localises to the host Golgi apparatus. The protein resides in the host trans-Golgi network. Functionally, plays an essential role in cytoplasmic secondary envelopment during viral egress. Interacts with the capsid via the large tegument protein/LTP and participates in its transport to the host trans-Golgi network (TGN) where secondary envelopment occurs. Modulates tegumentation and capsid accumulation at the viral assembly complex. The chain is Inner tegument protein (MDV050) from Gallid herpesvirus 2 (strain Chicken/Md5/ATCC VR-987) (GaHV-2).